The chain runs to 172 residues: Small ribosomal subunit protein uS5 (172 aa).

In terms of domain architecture, S5 DRBM spans 16–79 (LKDRLVAINR…ESAKKNLTRV (64 aa)).

This sequence belongs to the universal ribosomal protein uS5 family. In terms of assembly, part of the 30S ribosomal subunit. Contacts proteins S4 and S8.

In terms of biological role, with S4 and S12 plays an important role in translational accuracy. Located at the back of the 30S subunit body where it stabilizes the conformation of the head with respect to the body. This is Small ribosomal subunit protein uS5 from Bacteroides fragilis (strain ATCC 25285 / DSM 2151 / CCUG 4856 / JCM 11019 / LMG 10263 / NCTC 9343 / Onslow / VPI 2553 / EN-2).